Reading from the N-terminus, the 229-residue chain is Calcyclin-binding protein (229 aa).

Ala-2 is subject to N-acetylalanine. The segment at 2-81 (ASALEELQKD…YTVKISNYGW (80 aa)) is interaction with SIAH1. Ser-3 carries the post-translational modification Phosphoserine. N6-acetyllysine is present on residues Lys-10 and Lys-21. Ser-36 carries the phosphoserine modification. Residues 38 to 59 (IETELRNKMQQKSQKKPEFDNE) are disordered. Positions 74-168 (VKISNYGWDQ…AENTRWDYLT (95 aa)) constitute a CS domain. The segment at 74-229 (VKISNYGWDQ…EKQAREDTEF (156 aa)) is interaction with SKP1. An N6-acetyllysine mark is found at Lys-86 and Lys-119. The interaction with S100A6 stretch occupies residues 155 to 229 (CRKKAENTRW…EKQAREDTEF (75 aa)). The 61-residue stretch at 169-229 (QVEKECKEKE…EKQAREDTEF (61 aa)) folds into the SGS domain.

As to quaternary structure, component of some large E3 complex at least composed of UBE2D1, SIAH1, CACYBP/SIP, SKP1, APC and TBL1X. Interacts directly with SIAH1, SIAH2 and SKP1. Interacts with protein of the S100 family S100A1, S100A6, S100B, S100P and S100A12 in a calcium-dependent manner. In terms of processing, phosphorylated on serine residues. Phosphorylated upon induction by RA or at high calcium concentrations.

The protein localises to the nucleus. The protein resides in the cytoplasm. Its function is as follows. May be involved in calcium-dependent ubiquitination and subsequent proteasomal degradation of target proteins. Probably serves as a molecular bridge in ubiquitin E3 complexes. Participates in the ubiquitin-mediated degradation of beta-catenin (CTNNB1). This Rattus norvegicus (Rat) protein is Calcyclin-binding protein (Cacybp).